The sequence spans 193 residues: Protein D5 (193 aa).

Its function is as follows. Repression of replication initiation (possible). In Dictyostelium discoideum (Social amoeba), this protein is Protein D5 (ddpE).